Consider the following 282-residue polypeptide: MSRWPSPAKLNLFLYITGQRADGYHTLQTLFQFLDYGDTLTIEPRTDGQLRLLTPVAGVPDEENLIVRAARLLMRAASESDRLPAGSGADISVDKRLPMGGGLGGGSSNAATVLVALNHLWGCGLSEEELATLGLQLGADVPVFVRGHAAFAEGVGEILTPVEPEEKWYLVAHPGVSIPTPVIFRDPELPRNTPRRSINTLLNCEFSNDCELIARKRFREVDAALSWLLEYAPSRLTGTGACVFAEFNTESAARQVLDTAPAWLNGFVARGVNLSPLKQALL.

Lys9 is an active-site residue. 98-108 (PMGGGLGGGSS) lines the ATP pocket. Asp140 is a catalytic residue.

The protein belongs to the GHMP kinase family. IspE subfamily. As to quaternary structure, homodimer.

It catalyses the reaction 4-CDP-2-C-methyl-D-erythritol + ATP = 4-CDP-2-C-methyl-D-erythritol 2-phosphate + ADP + H(+). It participates in isoprenoid biosynthesis; isopentenyl diphosphate biosynthesis via DXP pathway; isopentenyl diphosphate from 1-deoxy-D-xylulose 5-phosphate: step 3/6. Its function is as follows. Catalyzes the phosphorylation of the position 2 hydroxy group of 4-diphosphocytidyl-2C-methyl-D-erythritol. The sequence is that of 4-diphosphocytidyl-2-C-methyl-D-erythritol kinase from Klebsiella pneumoniae (strain 342).